The primary structure comprises 970 residues: Sodium/calcium exchanger 1 (970 aa).

A signal peptide spans 1-32 (MLQLRLLPTFSMGCHLLAVVALLFSHVDLISA). Over 33-71 (ETEMEGEGNETGECTGSYYCKKGVILPIWEPQDPSFGDK) the chain is Extracellular. A glycan (N-linked (GlcNAc...) asparagine) is linked at asparagine 41. A helical transmembrane segment spans residues 72-92 (IARATVYFVAMVYMFLGVSII). The Cytoplasmic segment spans residues 93–133 (ADRFMSSIEVITSQEKEITIKKPNGETTKTTVRIWNETVSN). The helical transmembrane segment at 134-154 (LTLMALGSSAPEILLSVIEVC) threads the bilayer. One copy of the Alpha-1 repeat lies at 138–178 (ALGSSAPEILLSVIEVCGHNFTAGDLGPSTIVGSAAFNMFI). Residues 155–167 (GHNFTAGDLGPST) are Extracellular-facing. N-linked (GlcNAc...) asparagine glycosylation is present at asparagine 157. The helical transmembrane segment at 168 to 188 (IVGSAAFNMFIIIALCVYVVP) threads the bilayer. Residues 189–201 (DGETRKIKHLRVF) are Cytoplasmic-facing. A helical transmembrane segment spans residues 202–222 (FVTAAWSIFAYTWLYIILSVI). Residues 223-228 (SPGVVE) lie on the Extracellular side of the membrane. A helical transmembrane segment spans residues 229–249 (VWEGLLTFFFFPICVVFAWVA). Residues 250 to 797 (DRRLLFYKYV…FVPPTEYWNG (548 aa)) lie on the Cytoplasmic side of the membrane. The segment at 251–270 (RRLLFYKYVYKRYRAGKQRG) is putative calmodulin-binding region. Serine 282 and serine 389 each carry phosphoserine. Calx-beta domains are found at residues 393–493 (VNTE…VHLS) and 524–624 (ATVT…LEIG). Ca(2+) contacts are provided by glutamate 417, aspartate 453, aspartate 478, aspartate 479, isoleucine 481, glutamate 483, glutamate 486, aspartate 530, aspartate 531, aspartate 532, glutamate 548, aspartate 584, aspartate 610, glutamate 611, glutamate 612, and glutamate 715. A helical membrane pass occupies residues 798–818 (WACFIVSILMIGILTAFIGDL). The Extracellular segment spans residues 819-821 (ASH). Residues 822–842 (FGCTIGLKDSVTAVVFVALGT) traverse the membrane as a helical segment. One copy of the Alpha-2 repeat lies at 839–875 (ALGTSVPDTFASKVAATQDQYADASIGNVTGSNAVNV). Residues 843 to 871 (SVPDTFASKVAATQDQYADASIGNVTGSN) are Cytoplasmic-facing. A helical membrane pass occupies residues 872-892 (AVNVFLGIGVAWSIAAIYHAA). Over 893–903 (NGEQFKVSPGT) the chain is Extracellular. A helical transmembrane segment spans residues 904–924 (LAFSVTLFTIFAFINVGVLLY). Residues 925–941 (RRRPEIGGELGGPRTAK) are Cytoplasmic-facing. Residues 942 to 962 (LLTSCLFVLLWLLYIFFSSLE) form a helical membrane-spanning segment. The Extracellular segment spans residues 963-970 (AYCHIKGF).

This sequence belongs to the Ca(2+):cation antiporter (CaCA) (TC 2.A.19) family. SLC8 subfamily. Cardiac sarcolemma (at protein level).

The protein localises to the cell membrane. Its subcellular location is the sarcolemma. The catalysed reaction is Ca(2+)(in) + 3 Na(+)(out) = Ca(2+)(out) + 3 Na(+)(in). With respect to regulation, activated by micromolar levels of Ca(2+). In the absence of regulatory Ca(2+), channels open rapidly, and then inactivate rapidly. Inactivation is enhanced by Na(+) and is inhibited by micromolar levels of Ca(2+). Its function is as follows. Mediates the exchange of one Ca(2+) ion against three to four Na(+) ions across the cell membrane, and thereby contributes to the regulation of cytoplasmic Ca(2+) levels and Ca(2+)-dependent cellular processes. Contributes to Ca(2+) transport during excitation-contraction coupling in muscle. In a first phase, voltage-gated channels mediate the rapid increase of cytoplasmic Ca(2+) levels due to release of Ca(2+) stores from the endoplasmic reticulum. SLC8A1 mediates the export of Ca(2+) from the cell during the next phase, so that cytoplasmic Ca(2+) levels rapidly return to baseline. Required for normal embryonic heart development and the onset of heart contractions. This is Sodium/calcium exchanger 1 (SLC8A1) from Canis lupus familiaris (Dog).